A 493-amino-acid chain; its full sequence is MKKIFMMVHELDVNKGGMTSSMFNRSKEFYDADIPADIVTFDYKGNYDEIIKALKKQGKMDRRTKMYNVFEYFKQISNNKHFKSNKLLYKHISERLKNTIEIEESKGISRYFDITTGTYIAYIRKSKSEKVIDFFKDNKRIERFSFIDNKVHMKETFNVDNKVCYQVFYDEKGYPYISRNINANNGAVGKTYVLVNKKEFKNNLALCVYYLEKLIKDSKDSIMICDGPGSFPKMFNTNHKNAQKYGVIHVNHHENFDDTGAFKKSEKYIIENANKINGVIVLTEAQRLDILNQFDVENIFTISNFVKIHNAPKHFQTEKIVGHISRMVPTKRIDLLIEVAELVVKKDNAVKFHIYGEGSVKDKIAKMIEDKNLERNVFLKGYTTTPQKCLEDFKLVVSTSQYEGQGLSMIEAMISKRPVVAFDIKYGPSDFIEDNKNGYLIENHNINDMADKILQLVNNDVLAAEFGSKARENIIEKYSTESILEKWLNLFNS.

UDP-N-acetyl-alpha-D-glucosamine contacts are provided by residues glycine 17, lysine 59, histidine 249, arginine 326, lysine 331, threonine 383, and 403–411 (EGQGLSMIE).

It belongs to the glycosyltransferase group 1 family. As to quaternary structure, homotrimer.

The protein localises to the cytoplasm. The catalysed reaction is 4-O-[(D-ribitylphospho)(n)-di{(2R)-glycerylphospho}]-N-acetyl-beta-D-mannosaminyl-(1-&gt;4)-N-acetyl-alpha-D-glucosaminyl di-trans,octa-cis-undecaprenyl diphosphate + n UDP-N-acetyl-alpha-D-glucosamine = 4-O-([2-N-acetyl-alpha-D-glucosaminyl-1-D-ribitylphospho](n)-di{[2R]-1-glycerylphospho})-N-acetyl-beta-D-mannosaminyl-(1-&gt;4)-N-acetyl-alpha-D-glucosaminyl di-trans,octa-cis-undecaprenyl diphosphate + n UDP + n H(+). The protein operates within cell wall biogenesis; poly(ribitol phosphate) teichoic acid biosynthesis. Functionally, attaches N-acetyl-alpha-D-glucosamine residues to poly(RboP)-wall teichoic acids (WTAs). This is Poly(ribitol-phosphate) alpha-N-acetylglucosaminyltransferase from Staphylococcus aureus (strain COL).